The primary structure comprises 591 residues: MAVAPLRGALLLWQLLAAGGAALEIGRFDPERGRGAAPCQAVEIPMCRGIGYNLTRMPNLLGHTSQGEAAAELAEFAPLVQYGCHSHLRFFLCSLYAPMCTDQVSTPIPACRPMCEQARLRCAPIMEQFNFGWPDSLDCARLPTRNDPHALCMEAPENATAGPAEPHKGLGMLPVAPRPARPPGDLGPGAGGSGTCENPEKFQYVEKSRSCAPRCGPGVEVFWSRRDKDFALVWMAVWSALCFFSTAFTVLTFLLEPHRFQYPERPIIFLSMCYNVYSLAFLIRAVAGAQSVACDQEAGALYVIQEGLENTGCTLVFLLLYYFGMASSLWWVVLTLTWFLAAGKKWGHEAIEAHGSYFHMAAWGLPALKTIVILTLRKVAGDELTGLCYVASTDAAALTGFVLVPLSGYLVLGSSFLLTGFVALFHIRKIMKTGGTNTEKLEKLMVKIGVFSILYTVPATCVIVCYVYERLNMDFWRLRATEQPCAAAAGPGGRRDCSLPGGSVPTVAVFMLKIFMSLVVGITSGVWVWSSKTFQTWQSLCYRKIAAGRARAKACRAPGSYGRGTHCHYKAPTVVLHMTKTDPSLENPTHL.

The signal sequence occupies residues M1–A22. The Extracellular segment spans residues L23–D229. Residues R34–A155 form the FZ domain. 5 cysteine pairs are disulfide-bonded: C39–C100, C47–C93, C84–C122, C111–C152, and C115–C139. An N-linked (GlcNAc...) asparagine glycan is attached at N53. The required for Wnt-activated receptor activity stretch occupies residues P58–M172. N158 carries N-linked (GlcNAc...) asparagine glycosylation. A helical membrane pass occupies residues F230 to V250. Residues L251–P266 lie on the Cytoplasmic side of the membrane. The helical transmembrane segment at I267 to A287 threads the bilayer. The Extracellular segment spans residues G288–L315. Residues V316–L336 form a helical membrane-spanning segment. The Cytoplasmic portion of the chain corresponds to T337–G355. The helical transmembrane segment at S356–L376 threads the bilayer. Topologically, residues R377–G400 are extracellular. Residues F401–F421 traverse the membrane as a helical segment. The Cytoplasmic portion of the chain corresponds to V422–K447. The chain crosses the membrane as a helical span at residues I448–Y468. The Extracellular portion of the chain corresponds to E469–A508. The chain crosses the membrane as a helical span at residues V509–W529. The Cytoplasmic segment spans residues S530 to L591. A Lys-Thr-X-X-X-Trp motif, mediates interaction with the PDZ domain of Dvl family members motif is present at residues K532–W537. Residues A554–L591 are required for CTNNB1 accumulation and TCF transcription factor activity.

The protein belongs to the G-protein coupled receptor Fz/Smo family. In terms of processing, ubiquitinated by ZNRF3, leading to its degradation by the proteasome. Expressed predominantly in adult and fetal brain, testis, eye, skeletal muscle and kidney. Moderately expressed in pancreas, thyroid, adrenal cortex, small intestine and stomach. Detected in fetal liver and kidney. Expressed in neural progenitor cells.

Its subcellular location is the cell membrane. Its function is as follows. Receptor for WNT2 that is coupled to the beta-catenin canonical signaling pathway, which leads to the activation of disheveled proteins, inhibition of GSK-3 kinase, nuclear accumulation of beta-catenin and activation of Wnt target genes. Plays a role in neuromuscular junction (NMJ) assembly by negatively regulating the clustering of acetylcholine receptors (AChR) through the beta-catenin canonical signaling pathway. May play a role in neural progenitor cells (NPCs) viability through the beta-catenin canonical signaling pathway by negatively regulating cell cycle arrest leading to inhibition of neuron apoptotic process. During hippocampal development, regulates neuroblast proliferation and apoptotic cell death. Controls bone formation through non canonical Wnt signaling mediated via ISG15. Positively regulates bone regeneration through non canonical Wnt signaling. This is Frizzled-9 (FZD9) from Homo sapiens (Human).